We begin with the raw amino-acid sequence, 516 residues long: L-amino-acid oxidase (516 aa).

An N-terminal signal peptide occupies residues 1–18 (MNVFFMFSLLFLAALGSC). Cysteine 28 and cysteine 191 are disulfide-bonded. Residues 61–62 (MS), 81–82 (EA), arginine 89, and 105–108 (GPMR) contribute to the FAD site. Arginine 108 contacts substrate. An N-linked (GlcNAc...) asparagine glycan is attached at asparagine 190. Histidine 241 contacts substrate. An FAD-binding site is contributed by valine 279. Cysteines 349 and 430 form a disulfide. Asparagine 379 carries N-linked (GlcNAc...) asparagine glycosylation. Tyrosine 390 is a binding site for substrate. FAD contacts are provided by residues glutamate 475, 481-486 (HGWIDS), and 482-487 (GWIDSS). Residues 481-482 (HG) and 482-483 (GW) each bind substrate.

It belongs to the flavin monoamine oxidase family. FIG1 subfamily. As to quaternary structure, homodimer; non-covalently linked. FAD serves as cofactor. In terms of processing, N-glycosylated. As to expression, expressed by the venom gland.

The protein resides in the secreted. It carries out the reaction an L-alpha-amino acid + O2 + H2O = a 2-oxocarboxylate + H2O2 + NH4(+). Catalyzes an oxidative deamination of predominantly hydrophobic and aromatic L-amino acids, thus producing hydrogen peroxide that may contribute to the diverse toxic effects of this enzyme. Exhibits diverse biological activities, such as hemorrhage, hemolysis, edema, apoptosis of vascular endothelial cells or tumor cell lines, antibacterial and antiparasitic activities, as well as regulation of platelet aggregation. Effects of snake L-amino oxidases on platelets are controversial, since they either induce aggregation or inhibit agonist-induced aggregation. These different effects are probably due to different experimental conditions. Displays dose-dependent inhibition on HIV-1 infection and replication. The protein is L-amino-acid oxidase of Trimeresurus stejnegeri (Chinese green tree viper).